Here is a 112-residue protein sequence, read N- to C-terminus: HTH-type transcriptional regulator YodB (112 aa).

The HTH hxlR-type domain maps to 6–105; sequence CPKMESAFSL…WADQFCEPGD (100 aa).

Functionally, negatively regulates yodC and azoR1 which may contribute to the degradation of aromatic compounds. Probably positively regulates the catechol-specific transcription of mhqNOP, mhqED, and mhqA. The protein is HTH-type transcriptional regulator YodB (yodB) of Bacillus subtilis (strain 168).